A 324-amino-acid polypeptide reads, in one-letter code: Phospho-N-acetylmuramoyl-pentapeptide-transferase (324 aa).

Transmembrane regions (helical) follow at residues 9–29, 54–74, 77–97, 117–137, 147–167, 176–196, 201–221, 227–247, 253–273, and 304–324; these read TFAV…PFLV, MGAV…SFIG, VSAA…LGFL, FLGQ…SDFA, IEVD…VGFS, LDGL…VIAF, MDVA…LLFN, IFMG…VSIL, LLLL…LQVF, and VLTF…VVIF.

Belongs to the glycosyltransferase 4 family. MraY subfamily. Requires Mg(2+) as cofactor.

Its subcellular location is the cell membrane. It carries out the reaction UDP-N-acetyl-alpha-D-muramoyl-L-alanyl-gamma-D-glutamyl-meso-2,6-diaminopimeloyl-D-alanyl-D-alanine + di-trans,octa-cis-undecaprenyl phosphate = di-trans,octa-cis-undecaprenyl diphospho-N-acetyl-alpha-D-muramoyl-L-alanyl-D-glutamyl-meso-2,6-diaminopimeloyl-D-alanyl-D-alanine + UMP. It functions in the pathway cell wall biogenesis; peptidoglycan biosynthesis. Its function is as follows. Catalyzes the initial step of the lipid cycle reactions in the biosynthesis of the cell wall peptidoglycan: transfers peptidoglycan precursor phospho-MurNAc-pentapeptide from UDP-MurNAc-pentapeptide onto the lipid carrier undecaprenyl phosphate, yielding undecaprenyl-pyrophosphoryl-MurNAc-pentapeptide, known as lipid I. This is Phospho-N-acetylmuramoyl-pentapeptide-transferase from Listeria welshimeri serovar 6b (strain ATCC 35897 / DSM 20650 / CCUG 15529 / CIP 8149 / NCTC 11857 / SLCC 5334 / V8).